We begin with the raw amino-acid sequence, 196 residues long: MEIISLKRFILLMLATSSLLTSNIFCTDESRMPNLYSKKNYDKYSEPRGDLGWEKERSLTFEEVKDWAPKIKMNKPVVNKMPPSAANLPLRFGRNMEEERSTRAMAHLPLRLGKNREDSLSRWVPNLPQRFGRTTTAKSITKTLSNLLQQSMHSPSTNGLLYSMACQPQEIQNPGQKNLRRRGFQKIDDAELKQEK.

The first 21 residues, 1–21 (MEIISLKRFILLMLATSSLLT), serve as a signal peptide directing secretion. Residues 22–57 (SNIFCTDESRMPNLYSKKNYDKYSEPRGDLGWEKER) constitute a propeptide that is removed on maturation. F92 is subject to Phenylalanine amide. 2 propeptides span residues 95-99 (NMEEE) and 115-121 (NREDSLS). F131 carries the phenylalanine amide modification. A propeptide spanning residues 134-196 (TTTAKSITKT…IDDAELKQEK (63 aa)) is cleaved from the precursor.

It belongs to the FARP (FMRFamide related peptide) family.

The protein resides in the secreted. Functionally, efficiently inhibits forskolin-induced production of cAMP. Acts as a potent negative regulator of gonadotropin synthesis and secretion. Induces secretion of prolactin. Efficiently inhibits forskolin-induced production of cAMP. Blocks morphine-induced analgesia. In terms of biological role, shows no inhibitory activity of forskolin-induced production of cAMP. The polypeptide is Pro-FMRFamide-related neuropeptide VF (NPVF) (Bos taurus (Bovine)).